The sequence spans 391 residues: Formate-dependent phosphoribosylglycinamide formyltransferase (391 aa).

N(1)-(5-phospho-beta-D-ribosyl)glycinamide-binding positions include 18 to 19 (EL) and Glu78. ATP contacts are provided by residues Arg110, Lys151, 156 to 161 (SSGKGQ), 191 to 194 (EEFI), and Glu199. Positions 115–305 (ELVSRDLKIK…EFELHLRAFL (191 aa)) constitute an ATP-grasp domain. Residues Glu264 and Glu276 each contribute to the Mg(2+) site. Residues Asp283, Lys353, and 360–361 (RR) contribute to the N(1)-(5-phospho-beta-D-ribosyl)glycinamide site.

It belongs to the PurK/PurT family. In terms of assembly, homodimer.

It carries out the reaction N(1)-(5-phospho-beta-D-ribosyl)glycinamide + formate + ATP = N(2)-formyl-N(1)-(5-phospho-beta-D-ribosyl)glycinamide + ADP + phosphate + H(+). The protein operates within purine metabolism; IMP biosynthesis via de novo pathway; N(2)-formyl-N(1)-(5-phospho-D-ribosyl)glycinamide from N(1)-(5-phospho-D-ribosyl)glycinamide (formate route): step 1/1. In terms of biological role, involved in the de novo purine biosynthesis. Catalyzes the transfer of formate to 5-phospho-ribosyl-glycinamide (GAR), producing 5-phospho-ribosyl-N-formylglycinamide (FGAR). Formate is provided by PurU via hydrolysis of 10-formyl-tetrahydrofolate. This chain is Formate-dependent phosphoribosylglycinamide formyltransferase, found in Prochlorococcus marinus (strain MIT 9312).